Consider the following 141-residue polypeptide: Ribonuclease P protein component (141 aa).

Disordered stretches follow at residues 37 to 56 and 114 to 141; these read RTEEESNAAKTGDNPRVGFT and RRITAKGERRSGGKRRTERPEPGPVNGK. Residues 114–124 show a composition bias toward basic and acidic residues; the sequence is RRITAKGERRS.

The protein belongs to the RnpA family. Consists of a catalytic RNA component (M1 or rnpB) and a protein subunit.

The catalysed reaction is Endonucleolytic cleavage of RNA, removing 5'-extranucleotides from tRNA precursor.. Functionally, RNaseP catalyzes the removal of the 5'-leader sequence from pre-tRNA to produce the mature 5'-terminus. It can also cleave other RNA substrates such as 4.5S RNA. The protein component plays an auxiliary but essential role in vivo by binding to the 5'-leader sequence and broadening the substrate specificity of the ribozyme. This is Ribonuclease P protein component from Brucella melitensis biotype 1 (strain ATCC 23456 / CCUG 17765 / NCTC 10094 / 16M).